The sequence spans 84 residues: U-actitoxin-Avd8e (84 aa).

The N-terminal stretch at 1 to 22 is a signal peptide; it reads MASARTLVLLLIGAVLMCQVSA. The propeptide occupies 23 to 41; sequence DSELLNEILAAHMEEDMPE. Residues 44 to 84 enclose the ShKT domain; that stretch reads CIDRYRSNICGSVIRPLDCTRRKSRMGRFARTNCKKLCGFC. Intrachain disulfides connect C44/C84, C53/C77, and C62/C81.

This sequence belongs to the sea anemone 8 toxin family.

Its subcellular location is the secreted. It localises to the nematocyst. This is U-actitoxin-Avd8e from Anemonia viridis (Snakelocks anemone).